Reading from the N-terminus, the 146-residue chain is Deoxyuridine 5'-triphosphate nucleotidohydrolase (146 aa).

Substrate-binding positions include 66–68, asparagine 79, and 83–85; these read RSG and TID.

Belongs to the dUTPase family. It depends on Mg(2+) as a cofactor.

It carries out the reaction dUTP + H2O = dUMP + diphosphate + H(+). It participates in pyrimidine metabolism; dUMP biosynthesis; dUMP from dCTP (dUTP route): step 2/2. In terms of biological role, this enzyme is involved in nucleotide metabolism: it produces dUMP, the immediate precursor of thymidine nucleotides and it decreases the intracellular concentration of dUTP so that uracil cannot be incorporated into DNA. The chain is Deoxyuridine 5'-triphosphate nucleotidohydrolase from Citrifermentans bemidjiense (strain ATCC BAA-1014 / DSM 16622 / JCM 12645 / Bem) (Geobacter bemidjiensis).